The chain runs to 321 residues: Glucokinase (321 aa).

An ATP-binding site is contributed by Gly-8–Thr-13.

Belongs to the bacterial glucokinase family.

It localises to the cytoplasm. The catalysed reaction is D-glucose + ATP = D-glucose 6-phosphate + ADP + H(+). The protein is Glucokinase of Klebsiella pneumoniae subsp. pneumoniae (strain ATCC 700721 / MGH 78578).